The following is a 138-amino-acid chain: Lutropin subunit beta (138 aa).

An N-terminal signal peptide occupies residues 1 to 19 (RYQELTVLLLLLLEGGSWG). 6 cysteine pairs are disulfide-bonded: cysteine 27/cysteine 75, cysteine 41/cysteine 90, cysteine 44/cysteine 128, cysteine 52/cysteine 106, cysteine 56/cysteine 108, and cysteine 111/cysteine 118. Asparagine 31 carries N-linked (GlcNAc...) asparagine glycosylation.

The protein belongs to the glycoprotein hormones subunit beta family. As to quaternary structure, heterodimer of a common alpha chain and a unique beta chain which confers biological specificity to thyrotropin, lutropin, follitropin and gonadotropin.

It is found in the secreted. Promotes spermatogenesis and ovulation by stimulating the testes and ovaries to synthesize steroids. The sequence is that of Lutropin subunit beta (LHB) from Osphranter rufus (Red kangaroo).